The primary structure comprises 75 residues: Accessory gland-specific peptide 57Da (75 aa).

The first 19 residues, 1 to 19, serve as a signal peptide directing secretion; it reads MKFLALFVTLLVVLALVSA. A disordered region spans residues 55–75; that stretch reads AAPAAAPAAPEAGLADAPAES. The span at 56–75 shows a compositional bias: low complexity; that stretch reads APAAAPAAPEAGLADAPAES.

As to expression, lumen fluid of male accessory glands, becomes seminal fluid.

It is found in the secreted. Functionally, transferred from male to female during mating and may affect egglaying and behavior after mating. This Drosophila melanogaster (Fruit fly) protein is Accessory gland-specific peptide 57Da (Mst57Da).